The chain runs to 481 residues: Inosine-5'-monophosphate dehydrogenase (481 aa).

2 CBS domains span residues 92–148 (VIND…SKKV) and 152–209 (MTKM…PEAN). Residues Asp-244 and 293–295 (GIG) contribute to the NAD(+) site. The K(+) site is built by Gly-295 and Gly-297. Ser-298 is a binding site for IMP. K(+) is bound at residue Cys-300. Catalysis depends on Cys-300, which acts as the Thioimidate intermediate. Residues 333 to 335 (DGG), 356 to 357 (GS), and 380 to 384 (YRGMG) contribute to the IMP site. The active-site Proton acceptor is the Arg-396. Glu-410 is an IMP binding site. The K(+) site is built by Glu-464, Ser-465, and His-466.

This sequence belongs to the IMPDH/GMPR family. Homotetramer. It depends on K(+) as a cofactor.

It carries out the reaction IMP + NAD(+) + H2O = XMP + NADH + H(+). Its pathway is purine metabolism; XMP biosynthesis via de novo pathway; XMP from IMP: step 1/1. With respect to regulation, mycophenolic acid (MPA) is a non-competitive inhibitor that prevents formation of the closed enzyme conformation by binding to the same site as the amobile flap. In contrast, mizoribine monophosphate (MZP) is a competitive inhibitor that induces the closed conformation. MPA is a potent inhibitor of mammalian IMPDHs but a poor inhibitor of the bacterial enzymes. MZP is a more potent inhibitor of bacterial IMPDH. In terms of biological role, catalyzes the conversion of inosine 5'-phosphate (IMP) to xanthosine 5'-phosphate (XMP), the first committed and rate-limiting step in the de novo synthesis of guanine nucleotides, and therefore plays an important role in the regulation of cell growth. The protein is Inosine-5'-monophosphate dehydrogenase of Helicobacter pylori (strain J99 / ATCC 700824) (Campylobacter pylori J99).